We begin with the raw amino-acid sequence, 208 residues long: UPF0637 protein BCAH820_3975 (208 aa).

The protein belongs to the UPF0637 family.

In Bacillus cereus (strain AH820), this protein is UPF0637 protein BCAH820_3975.